The primary structure comprises 148 residues: UPF0756 membrane protein ESA_02180 (148 aa).

A run of 4 helical transmembrane segments spans residues 4 to 24, 51 to 71, 86 to 106, and 112 to 132; these read ITLL…NMAV, VTVG…SGTL, LVAI…VALM, and IVAG…GVPV.

Belongs to the UPF0756 family.

It is found in the cell membrane. This Cronobacter sakazakii (strain ATCC BAA-894) (Enterobacter sakazakii) protein is UPF0756 membrane protein ESA_02180.